The chain runs to 683 residues: Probable metal-nicotianamine transporter YSL3 (683 aa).

A run of 14 helical transmembrane segments spans residues 29-49 (LVTP…CFVG), 58-78 (IVPA…KWLI), 97-117 (MFLL…GFAT), 142-162 (HVPI…GVLI), 204-224 (VATI…QWFY), 265-285 (IVNF…YPFL), 309-329 (VFIS…TLIT), 372-392 (IPIP…TIAI), 404-424 (LAVL…ATGL), 448-468 (PGAV…LHIS), 490-510 (TGQI…FLAF), 553-573 (CMTF…VVLV), 595-615 (FFAG…LLAW), and 628-648 (SAVA…SALL).

It belongs to the YSL (TC 2.A.67.2) family.

It is found in the membrane. In terms of biological role, may be involved in the transport of nicotianamine-chelated metals. This chain is Probable metal-nicotianamine transporter YSL3 (YSL3), found in Oryza sativa subsp. japonica (Rice).